Reading from the N-terminus, the 231-residue chain is Phosphoglycolate phosphatase (231 aa).

Asp-9 functions as the Nucleophile in the catalytic mechanism. Mg(2+) contacts are provided by Asp-9 and Asp-11. Residue Lys-154 participates in substrate binding. Mg(2+) is bound by residues Asp-177 and Asp-181.

It belongs to the archaeal SPP-like hydrolase family. Mg(2+) is required as a cofactor.

The enzyme catalyses 2-phosphoglycolate + H2O = glycolate + phosphate. Its function is as follows. Catalyzes the dephosphorylation of 2-phosphoglycolate. The protein is Phosphoglycolate phosphatase of Nitrosopumilus maritimus (strain SCM1).